A 394-amino-acid polypeptide reads, in one-letter code: Aspergillopepsin-1 (394 aa).

A signal peptide spans 1–20 (MVVFSKTAALVLGLSSAVSA). Positions 21–69 (APAPTRKGFTINQIARPANKTRTINLPGMYARSLAKFGGTVPQSVKEAA) are cleaved as a propeptide — activation peptide. The Peptidase A1 domain maps to 85–391 (YLTPVTVGKS…NSEGPKLGFA (307 aa)). Active-site residues include D101 and D283. Residues C319 and C354 are joined by a disulfide bond.

Belongs to the peptidase A1 family. Monomer.

It localises to the secreted. The catalysed reaction is Hydrolysis of proteins with broad specificity. Generally favors hydrophobic residues in P1 and P1', but also accepts Lys in P1, which leads to activation of trypsinogen. Does not clot milk.. Its function is as follows. Secreted aspartic endopeptidase that allows assimilation of proteinaceous substrates. The scissile peptide bond is attacked by a nucleophilic water molecule activated by two aspartic residues in the active site. Shows a broad primary substrate specificity. Favors hydrophobic residues at the P1 and P1' positions, but also accepts a lysine residue in the P1 position, leading to the activation of trypsinogen and chymotrypsinogen A. In Aspergillus niger (strain ATCC MYA-4892 / CBS 513.88 / FGSC A1513), this protein is Aspergillopepsin-1 (pepA).